Consider the following 98-residue polypeptide: MFEQRVNSDVLTVSTVNSQDQVTQKPLRDSVKQALKNYFAQLNGQDVSDLYELVLAEVEQPLLDMVMQYTRGNQTRAALMMGINRGTLRKKLKKYGMN.

Positions 74-93 (QTRAALMMGINRGTLRKKLK) form a DNA-binding region, H-T-H motif.

The protein belongs to the transcriptional regulatory Fis family. As to quaternary structure, homodimer.

Functionally, activates ribosomal RNA transcription. Plays a direct role in upstream activation of rRNA promoters. This Enterobacter sp. (strain 638) protein is DNA-binding protein Fis.